The following is a 563-amino-acid chain: Chaperonin GroEL 1 (563 aa).

ATP-binding positions include 29–32, 86–90, G413, 476–478, and D492; these read TIGP, DGTTT, and NAA. The disordered stretch occupies residues 520 to 545; the sequence is DKPEPPSPAGGEGGGDPMGGMGGMGG. Residues 529–545 are compositionally biased toward gly residues; that stretch reads GGEGGGDPMGGMGGMGG.

The protein belongs to the chaperonin (HSP60) family. In terms of assembly, forms a cylinder of 14 subunits composed of two heptameric rings stacked back-to-back. Interacts with the co-chaperonin GroES.

The protein localises to the cytoplasm. The catalysed reaction is ATP + H2O + a folded polypeptide = ADP + phosphate + an unfolded polypeptide.. Its function is as follows. Together with its co-chaperonin GroES, plays an essential role in assisting protein folding. The GroEL-GroES system forms a nano-cage that allows encapsulation of the non-native substrate proteins and provides a physical environment optimized to promote and accelerate protein folding. The sequence is that of Chaperonin GroEL 1 from Prochlorococcus marinus (strain SARG / CCMP1375 / SS120).